Consider the following 449-residue polypeptide: C4-dicarboxylate transport protein (449 aa).

A run of 9 helical transmembrane segments spans residues 5–25 (AVFKSLYFQVLVAIAIGVSLG), 45–65 (LIKMIIAPIIFCTIVVGIAGM), 77–97 (LAVLYFEVVSTIALVIGLIVV), 149–169 (GDMLQVLFFSILFGYAMHSFG), 185–205 (VLFGIVGVIMKVAPIGAFGAM), 231–251 (CVIFILGVLGSIAAFHGFSII), 298–318 (GYSFNLDGTSIYLTMAAVFIA), 332–352 (TLLVILLLTSKGAAGVTGSGF), and 353–373 (IVLAATLSAVGTVPVAGLALI).

Belongs to the dicarboxylate/amino acid:cation symporter (DAACS) (TC 2.A.23) family.

Its subcellular location is the cell inner membrane. In terms of biological role, responsible for the transport of dicarboxylates such as succinate, fumarate, and malate from the periplasm across the membrane. The polypeptide is C4-dicarboxylate transport protein (Dechloromonas aromatica (strain RCB)).